The chain runs to 488 residues: Protein nucleotidyltransferase YdiU (488 aa).

8 residues coordinate ATP: Gly91, Gly93, Arg94, Lys114, Asp126, Gly127, Arg177, and Arg184. Residue Asp253 is the Proton acceptor of the active site. Asn254 and Asp263 together coordinate Mg(2+). Residue Asp263 participates in ATP binding.

The protein belongs to the SELO family. Mg(2+) is required as a cofactor. The cofactor is Mn(2+).

The enzyme catalyses L-seryl-[protein] + ATP = 3-O-(5'-adenylyl)-L-seryl-[protein] + diphosphate. It carries out the reaction L-threonyl-[protein] + ATP = 3-O-(5'-adenylyl)-L-threonyl-[protein] + diphosphate. It catalyses the reaction L-tyrosyl-[protein] + ATP = O-(5'-adenylyl)-L-tyrosyl-[protein] + diphosphate. The catalysed reaction is L-histidyl-[protein] + UTP = N(tele)-(5'-uridylyl)-L-histidyl-[protein] + diphosphate. The enzyme catalyses L-seryl-[protein] + UTP = O-(5'-uridylyl)-L-seryl-[protein] + diphosphate. It carries out the reaction L-tyrosyl-[protein] + UTP = O-(5'-uridylyl)-L-tyrosyl-[protein] + diphosphate. In terms of biological role, nucleotidyltransferase involved in the post-translational modification of proteins. It can catalyze the addition of adenosine monophosphate (AMP) or uridine monophosphate (UMP) to a protein, resulting in modifications known as AMPylation and UMPylation. The protein is Protein nucleotidyltransferase YdiU of Bacillus cereus (strain ATCC 14579 / DSM 31 / CCUG 7414 / JCM 2152 / NBRC 15305 / NCIMB 9373 / NCTC 2599 / NRRL B-3711).